A 108-amino-acid chain; its full sequence is UPF0060 membrane protein SH0717 (108 aa).

Transmembrane regions (helical) follow at residues 5-25 (IFIFLLAGLCEIGGGYLIWLW), 31-51 (SSWLGFIGGVILMMYGVIATF), 60-80 (VYAAYGGVFIVMSLIWAYIVD), and 86-106 (KYDLIGACICIIGVCVMILPS).

Belongs to the UPF0060 family.

Its subcellular location is the cell membrane. In Staphylococcus haemolyticus (strain JCSC1435), this protein is UPF0060 membrane protein SH0717.